Reading from the N-terminus, the 40-residue chain is Beta-defensin 2 (40 aa).

3 disulfide bridges follow: C7-C36, C14-C29, and C19-C37.

The protein belongs to the beta-defensin family. As to expression, neutrophilic granules.

It localises to the secreted. Its function is as follows. Has bactericidal activity. Active against E.coli ML35 and S.aureus 502A. The protein is Beta-defensin 2 (DEFB2) of Bos taurus (Bovine).